The sequence spans 564 residues: Potassium-transporting ATPase potassium-binding subunit (564 aa).

10 helical membrane passes run 4-24 (YDFA…PWLG), 67-87 (TLAL…VLLL), 135-155 (LGLT…LVVL), 179-199 (LYGL…QGVP), 258-278 (FEVA…GHYV), 286-306 (AILA…LWSE), 382-402 (AGLY…GLMI), 420-440 (LLVA…AIAA), 487-507 (LMIG…ILAL), and 533-553 (GLLL…TLAL).

It belongs to the KdpA family. The system is composed of three essential subunits: KdpA, KdpB and KdpC.

It localises to the cell inner membrane. Its function is as follows. Part of the high-affinity ATP-driven potassium transport (or Kdp) system, which catalyzes the hydrolysis of ATP coupled with the electrogenic transport of potassium into the cytoplasm. This subunit binds the periplasmic potassium ions and delivers the ions to the membrane domain of KdpB through an intramembrane tunnel. The protein is Potassium-transporting ATPase potassium-binding subunit of Pseudomonas putida (strain ATCC 47054 / DSM 6125 / CFBP 8728 / NCIMB 11950 / KT2440).